Consider the following 274-residue polypeptide: Large ribosomal subunit protein uL2cz/uL2cy (274 aa).

Disordered regions lie at residues 1–23 and 224–274; these read MAIHLYKTSTPSTRNGAVDSKVK and NPVD…RRSK.

Belongs to the universal ribosomal protein uL2 family. In terms of assembly, part of the 50S ribosomal subunit.

Its subcellular location is the plastid. The protein resides in the chloroplast. In Lactuca sativa (Garden lettuce), this protein is Large ribosomal subunit protein uL2cz/uL2cy (rpl2-A).